The primary structure comprises 194 residues: Phosphoheptose isomerase (194 aa).

The 158-residue stretch at 37-194 (ISNSFKQGGK…LIEFEMAKQA (158 aa)) folds into the SIS domain. Residue 52–54 (NGG) participates in substrate binding. His61 and Glu65 together coordinate Zn(2+). Substrate contacts are provided by residues Glu65, 93-94 (ND), 119-121 (STS), Ser124, and Gln172. Residues Gln172 and His180 each contribute to the Zn(2+) site.

It belongs to the SIS family. GmhA subfamily. As to quaternary structure, homotetramer. It depends on Zn(2+) as a cofactor.

The protein resides in the cytoplasm. The enzyme catalyses 2 D-sedoheptulose 7-phosphate = D-glycero-alpha-D-manno-heptose 7-phosphate + D-glycero-beta-D-manno-heptose 7-phosphate. It functions in the pathway carbohydrate biosynthesis; D-glycero-D-manno-heptose 7-phosphate biosynthesis; D-glycero-alpha-D-manno-heptose 7-phosphate and D-glycero-beta-D-manno-heptose 7-phosphate from sedoheptulose 7-phosphate: step 1/1. Catalyzes the isomerization of sedoheptulose 7-phosphate in D-glycero-D-manno-heptose 7-phosphate. This is Phosphoheptose isomerase from Haemophilus influenzae (strain PittGG).